The following is a 478-amino-acid chain: Ribosomal RNA small subunit methyltransferase F (478 aa).

S-adenosyl-L-methionine is bound by residues 125–131 (AAAPGSK), Glu-149, Asp-176, and Asp-194. The Nucleophile role is filled by Cys-247.

Belongs to the class I-like SAM-binding methyltransferase superfamily. RsmB/NOP family.

The protein localises to the cytoplasm. The catalysed reaction is cytidine(1407) in 16S rRNA + S-adenosyl-L-methionine = 5-methylcytidine(1407) in 16S rRNA + S-adenosyl-L-homocysteine + H(+). Specifically methylates the cytosine at position 1407 (m5C1407) of 16S rRNA. This Serratia proteamaculans (strain 568) protein is Ribosomal RNA small subunit methyltransferase F.